The sequence spans 117 residues: Ig heavy chain V region 186-1 (117 aa).

The N-terminal stretch at 1–19 (MGWSCIMLFLAATATGVHS) is a signal peptide. Residues 20–49 (QVQLQQPGAELVKPGASVKLSCKASGYTFT) form a framework-1 region. A disulfide bridge links Cys-41 with Cys-115. The interval 50–54 (SYWMH) is complementarity-determining-1. Positions 55-68 (WVKQRPGRGLEWIG) are framework-2. Residues 69–85 (RIDPNSGGTKYNEKFKS) form a complementarity-determining-2 region. A framework-3 region spans residues 86–117 (KATLTVDTSSSTAYMQLHSLTSEDSAVYYCAR).

The protein is Ig heavy chain V region 186-1 of Mus musculus (Mouse).